Here is a 520-residue protein sequence, read N- to C-terminus: Putative lipase ATG15 (520 aa).

Residues methionine 1–proline 14 are Cytoplasmic-facing. A helical; Signal-anchor for type II membrane protein transmembrane segment spans residues leucine 15–leucine 35. At proline 36–leucine 520 the chain is on the lumenal side. N-linked (GlcNAc...) asparagine glycosylation is found at asparagine 173, asparagine 202, and asparagine 208. Catalysis depends on serine 332, which acts as the Charge relay system.

It belongs to the AB hydrolase superfamily. Lipase family. In terms of assembly, binds to both phosphatidylinositol (PI) and phosphatidylinositol 3,5-bisphosphate (PIP2). Glycosylated.

It is found in the endosome. The protein localises to the multivesicular body membrane. Its subcellular location is the prevacuolar compartment membrane. The catalysed reaction is a triacylglycerol + H2O = a diacylglycerol + a fatty acid + H(+). In terms of biological role, lipase which is essential for lysis of subvacuolar cytoplasm to vacuole targeted bodies and intravacuolar autophagic bodies. Involved in the lysis of intravacuolar multivesicular body (MVB) vesicles. The intravacuolar membrane disintegration by ATG15 is critical to life span extension. This is Putative lipase ATG15 (ATG15) from Saccharomyces cerevisiae (strain ATCC 204508 / S288c) (Baker's yeast).